Consider the following 155-residue polypeptide: Large ribosomal subunit protein uL13 (155 aa).

Belongs to the universal ribosomal protein uL13 family. As to quaternary structure, part of the 50S ribosomal subunit.

This protein is one of the early assembly proteins of the 50S ribosomal subunit, although it is not seen to bind rRNA by itself. It is important during the early stages of 50S assembly. This chain is Large ribosomal subunit protein uL13, found in Rickettsia typhi (strain ATCC VR-144 / Wilmington).